The chain runs to 160 residues: UPF0260 protein GDI1595/Gdia_1801 (160 aa).

The protein belongs to the UPF0260 family.

The polypeptide is UPF0260 protein GDI1595/Gdia_1801 (Gluconacetobacter diazotrophicus (strain ATCC 49037 / DSM 5601 / CCUG 37298 / CIP 103539 / LMG 7603 / PAl5)).